The sequence spans 517 residues: Bifunctional purine biosynthesis protein PurH (517 aa).

One can recognise an MGS-like domain in the interval 1 to 145 (MSPLALVSVS…KNHADVAVLV (145 aa)).

It belongs to the PurH family.

It catalyses the reaction (6R)-10-formyltetrahydrofolate + 5-amino-1-(5-phospho-beta-D-ribosyl)imidazole-4-carboxamide = 5-formamido-1-(5-phospho-D-ribosyl)imidazole-4-carboxamide + (6S)-5,6,7,8-tetrahydrofolate. The catalysed reaction is IMP + H2O = 5-formamido-1-(5-phospho-D-ribosyl)imidazole-4-carboxamide. The protein operates within purine metabolism; IMP biosynthesis via de novo pathway; 5-formamido-1-(5-phospho-D-ribosyl)imidazole-4-carboxamide from 5-amino-1-(5-phospho-D-ribosyl)imidazole-4-carboxamide (10-formyl THF route): step 1/1. Its pathway is purine metabolism; IMP biosynthesis via de novo pathway; IMP from 5-formamido-1-(5-phospho-D-ribosyl)imidazole-4-carboxamide: step 1/1. This is Bifunctional purine biosynthesis protein PurH from Prochlorococcus marinus (strain MIT 9515).